The sequence spans 501 residues: Aspartyl/glutamyl-tRNA(Asn/Gln) amidotransferase subunit B (501 aa).

It belongs to the GatB/GatE family. GatB subfamily. Heterotrimer of A, B and C subunits.

The enzyme catalyses L-glutamyl-tRNA(Gln) + L-glutamine + ATP + H2O = L-glutaminyl-tRNA(Gln) + L-glutamate + ADP + phosphate + H(+). It carries out the reaction L-aspartyl-tRNA(Asn) + L-glutamine + ATP + H2O = L-asparaginyl-tRNA(Asn) + L-glutamate + ADP + phosphate + 2 H(+). Functionally, allows the formation of correctly charged Asn-tRNA(Asn) or Gln-tRNA(Gln) through the transamidation of misacylated Asp-tRNA(Asn) or Glu-tRNA(Gln) in organisms which lack either or both of asparaginyl-tRNA or glutaminyl-tRNA synthetases. The reaction takes place in the presence of glutamine and ATP through an activated phospho-Asp-tRNA(Asn) or phospho-Glu-tRNA(Gln). The protein is Aspartyl/glutamyl-tRNA(Asn/Gln) amidotransferase subunit B of Agrobacterium fabrum (strain C58 / ATCC 33970) (Agrobacterium tumefaciens (strain C58)).